Consider the following 24-residue polypeptide: Lactadherin (24 aa).

It localises to the membrane. Its subcellular location is the secreted. It is found in the cytoplasmic vesicle. The protein resides in the secretory vesicle. The protein localises to the acrosome membrane. In terms of biological role, specific ligand for the alpha-v/beta-3 and alpha-v/beta-5 receptors. Also binds to phosphatidylserine-enriched cell surfaces in a receptor-independent manner. Zona pellucida-binding protein which may play a role in gamete interaction. Contributes to phagocytic removal of apoptotic cells in many tissues. Plays an important role in the maintenance of intestinal epithelial homeostasis and the promotion of mucosal healing. Promotes VEGF-dependent neovascularization. The protein is Lactadherin of Equus asinus (Donkey).